An 86-amino-acid polypeptide reads, in one-letter code: Triple QxxK/R motif-containing protein (86 aa).

Residues 51–71 traverse the membrane as a helical segment; that stretch reads VGLVLAAILALLLAFYAFFYL.

The protein belongs to the TRIQK family.

The protein resides in the endoplasmic reticulum membrane. Its function is as follows. May play a role in cell growth and maintenance of cell morphology. The sequence is that of Triple QxxK/R motif-containing protein (TRIQK) from Homo sapiens (Human).